A 249-amino-acid polypeptide reads, in one-letter code: Type III pantothenate kinase (249 aa).

Position 6 to 13 (6 to 13 (DVGNTHTT)) interacts with ATP. 101–104 (GADR) is a binding site for substrate. Asp103 (proton acceptor) is an active-site residue. K(+) is bound at residue Asp123. Residue Thr126 participates in ATP binding. Substrate is bound at residue Thr177.

Belongs to the type III pantothenate kinase family. As to quaternary structure, homodimer. NH4(+) is required as a cofactor. Requires K(+) as cofactor.

Its subcellular location is the cytoplasm. It carries out the reaction (R)-pantothenate + ATP = (R)-4'-phosphopantothenate + ADP + H(+). It participates in cofactor biosynthesis; coenzyme A biosynthesis; CoA from (R)-pantothenate: step 1/5. Catalyzes the phosphorylation of pantothenate (Pan), the first step in CoA biosynthesis. This chain is Type III pantothenate kinase, found in Thermosipho africanus (strain TCF52B).